The chain runs to 177 residues: Large ribosomal subunit protein uL6 (177 aa).

The protein belongs to the universal ribosomal protein uL6 family. In terms of assembly, part of the 50S ribosomal subunit.

Functionally, this protein binds to the 23S rRNA, and is important in its secondary structure. It is located near the subunit interface in the base of the L7/L12 stalk, and near the tRNA binding site of the peptidyltransferase center. This Polaromonas naphthalenivorans (strain CJ2) protein is Large ribosomal subunit protein uL6.